Consider the following 122-residue polypeptide: Large ribosomal subunit protein uL14 (122 aa).

The protein belongs to the universal ribosomal protein uL14 family. As to quaternary structure, part of the 50S ribosomal subunit. Forms a cluster with proteins L3 and L19. In the 70S ribosome, L14 and L19 interact and together make contacts with the 16S rRNA in bridges B5 and B8.

Its function is as follows. Binds to 23S rRNA. Forms part of two intersubunit bridges in the 70S ribosome. The chain is Large ribosomal subunit protein uL14 from Methylococcus capsulatus (strain ATCC 33009 / NCIMB 11132 / Bath).